The primary structure comprises 390 residues: Neutrophil cytosol factor 1 (390 aa).

In terms of domain architecture, PX spans 4–125; the sequence is TFIRHIALLG…DFFKVRPDDL (122 aa). 2 consecutive SH3 domains span residues 156–215 and 226–285; these read IILQ…PLDS and YAGE…KSGQ. The segment at 285 to 390 is disordered; that stretch reads QDVSQAQRQI…STKRKLASAV (106 aa). Phosphoserine occurs at positions 303 and 304. Positions 309 to 318 are enriched in basic residues; the sequence is HSIHQRSRKR. Serine 320, serine 328, serine 345, and serine 348 each carry phosphoserine.

As to quaternary structure, component of the phagocyte NADPH oxidase complex composed of an obligatory core heterodimer formed by the membrane proteins CYBA and CYBB and the cytosolic regulatory subunits NCF1/p47-phox, NCF2/p67-phox, NCF4/p40-phox and the small GTPase RAC1 or RAC2. Part of a cytosolic complex composed at least by NCF1, NCF2 and NCF4. Interacts (via C-terminus) with NCF2 (via the C-terminal SH3 domain). Interacts with NCF4. Interacts with CYBB. Interacts (via the second SH3 domain) with CYBA; interaction is phosphorylation-dependent. Interacts with NOXA1. Interacts with ADAM15. Interacts with TRAF4. Interacts with FASLG. Interacts with PARK7 (via C-terminus); the interaction is enhanced by LPS and modulates NCF1 phosphorylation and membrane translocation. Post-translationally, phosphorylated by PRKCD; phosphorylation induces activation of NCF1, leading to assembly and activation of the NADPH oxidase complex. In terms of tissue distribution, detected in peripheral blood monocytes and neutrophils (at protein level).

Its subcellular location is the cytoplasm. It localises to the cytosol. The protein resides in the membrane. In terms of biological role, subunit of the phagocyte NADPH oxidase complex that mediates the transfer of electrons from cytosolic NADPH to O2 to produce the superoxide anion (O2(-)). In the activated complex, electrons are first transferred from NADPH to flavin adenine dinucleotide (FAD) and subsequently transferred via two heme molecules to molecular oxygen, producing superoxide through an outer-sphere reaction. Activation of the NADPH oxidase complex is initiated by the assembly of cytosolic subunits of the NADPH oxidase complex with the core NADPH oxidase complex to form a complex at the plasma membrane or phagosomal membrane. This activation process is initiated by phosphorylation dependent binding of the cytosolic NCF1/p47-phox subunit to the C-terminus of CYBA/p22-phox. This Homo sapiens (Human) protein is Neutrophil cytosol factor 1.